The sequence spans 455 residues: Acid sphingomyelinase-like phosphodiesterase 3b (455 aa).

An N-terminal signal peptide occupies residues 1-18 (MRLLAWLIFLANWGGARA). Residues aspartate 28 and histidine 30 each contribute to the Zn(2+) site. Cysteine 45 and cysteine 64 are joined by a disulfide. A glycan (N-linked (GlcNAc...) asparagine) is linked at asparagine 72. Zn(2+)-binding residues include aspartate 93 and asparagine 134. A glycan (N-linked (GlcNAc...) asparagine) is linked at asparagine 164. Histidine 236, histidine 277, and histidine 279 together coordinate Zn(2+). Asparagine 343 carries an N-linked (GlcNAc...) asparagine glycan. Intrachain disulfides connect cysteine 405–cysteine 409 and cysteine 415–cysteine 428.

This sequence belongs to the acid sphingomyelinase family. In terms of assembly, interacts with TLR4, TLR7, TLR8 and TLR9. Zn(2+) serves as cofactor. In terms of processing, N-glycosylated.

The protein resides in the secreted. It is found in the cell membrane. In terms of biological role, lipid-modulating phosphodiesterase. Active on the surface of macrophages and dendritic cells and strongly influences macrophage lipid composition and membrane fluidity. Acts as a negative regulator of Toll-like receptor signaling. Has in vitro phosphodiesterase activity, but the physiological substrate is unknown. Lacks activity with phosphocholine-containing lipids, but can cleave CDP-choline, and can release phosphate from ATP and ADP (in vitro). This is Acid sphingomyelinase-like phosphodiesterase 3b (SMPDL3B) from Homo sapiens (Human).